Consider the following 241-residue polypeptide: 1-(5-phosphoribosyl)-5-[(5-phosphoribosylamino)methylideneamino] imidazole-4-carboxamide isomerase (241 aa).

Catalysis depends on D12, which acts as the Proton acceptor. The Proton donor role is filled by D133.

This sequence belongs to the HisA/HisF family.

The protein localises to the cytoplasm. The enzyme catalyses 1-(5-phospho-beta-D-ribosyl)-5-[(5-phospho-beta-D-ribosylamino)methylideneamino]imidazole-4-carboxamide = 5-[(5-phospho-1-deoxy-D-ribulos-1-ylimino)methylamino]-1-(5-phospho-beta-D-ribosyl)imidazole-4-carboxamide. It functions in the pathway amino-acid biosynthesis; L-histidine biosynthesis; L-histidine from 5-phospho-alpha-D-ribose 1-diphosphate: step 4/9. The sequence is that of 1-(5-phosphoribosyl)-5-[(5-phosphoribosylamino)methylideneamino] imidazole-4-carboxamide isomerase from Persephonella marina (strain DSM 14350 / EX-H1).